Consider the following 437-residue polypeptide: Enolase 2 (437 aa).

Substrate is bound by residues His160 and Glu169. The Proton donor role is filled by Glu212. Mg(2+) contacts are provided by Asp247, Glu296, and Asp321. Residues Glu296 and Asp321 each coordinate substrate. The active-site Proton acceptor is Lys346. Substrate-binding positions include 373–376 and Lys397; that span reads SHRS.

The protein belongs to the enolase family. Homodimer. The cofactor is Mg(2+).

It localises to the cytoplasm. It carries out the reaction (2R)-2-phosphoglycerate = phosphoenolpyruvate + H2O. It participates in carbohydrate degradation; glycolysis; pyruvate from D-glyceraldehyde 3-phosphate: step 4/5. This chain is Enolase 2 (ENO2), found in Candida glabrata (strain ATCC 2001 / BCRC 20586 / JCM 3761 / NBRC 0622 / NRRL Y-65 / CBS 138) (Yeast).